Reading from the N-terminus, the 95-residue chain is Orphan antitoxin ParD2 (95 aa).

Its function is as follows. Antitoxin component of a non-functional type II toxin-antitoxin (TA system). Does not neutralize the effect of any of the RelE or ParE toxins. The polypeptide is Orphan antitoxin ParD2 (parD2) (Caulobacter vibrioides (strain ATCC 19089 / CIP 103742 / CB 15) (Caulobacter crescentus)).